We begin with the raw amino-acid sequence, 183 residues long: Dual-action ribosomal maturation protein DarP (183 aa).

The protein belongs to the DarP family.

It is found in the cytoplasm. Functionally, member of a network of 50S ribosomal subunit biogenesis factors which assembles along the 30S-50S interface, preventing incorrect 23S rRNA structures from forming. Promotes peptidyl transferase center (PTC) maturation. The protein is Dual-action ribosomal maturation protein DarP of Citrobacter koseri (strain ATCC BAA-895 / CDC 4225-83 / SGSC4696).